The following is a 499-amino-acid chain: Cryptochrome-1 (499 aa).

Residues Arg-190, Ser-218, Ser-220, Gln-261, His-328, 360 to 362 (DAD), Cys-366, and Asn-369 contribute to the FAD site.

It belongs to the DNA photolyase class-1 family. Interacts with tim and per; promoted by light conditions. The cofactor is FAD.

The protein resides in the cytoplasm. The protein localises to the perinuclear region. It localises to the nucleus. Functionally, blue light-dependent regulator that is the input of the circadian feedback loop. Has no photolyase activity for cyclobutane pyrimidine dimers or 6-4 photoproducts. Regulation of expression by light suggests a role in photoreception for locomotor activity rhythms. Functions, together with per, as a transcriptional repressor required for the oscillation of peripheral circadian clocks and for the correct specification of clock cells. Genes directly activated by the transcription factors Clock (Clk) and cycle (cyc) are repressed by cry. The chain is Cryptochrome-1 from Culex quinquefasciatus (Southern house mosquito).